We begin with the raw amino-acid sequence, 2045 residues long: Host cell factor 1 (2045 aa).

Alanine 2 carries the post-translational modification N-acetylalanine. A Phosphoserine modification is found at serine 6. 5 Kelch repeats span residues 44–89, 93–140, 148–194, 217–265, and 266–313; these read LIVV…GFVC, RLLV…RLGH, KCYL…ITYG, KLVI…TIGN, and KMYV…LMDT. Glycyl lysine isopeptide (Lys-Gly) (interchain with G-Cter in ubiquitin) cross-links involve residues lysine 105, lysine 163, and lysine 244. A Glycyl lysine isopeptide (Lys-Gly) (interchain with G-Cter in SUMO2) cross-link involves residue lysine 282. Lysine 288 carries the N6-acetyllysine modification. Lysine 363 is covalently cross-linked (Glycyl lysine isopeptide (Lys-Gly) (interchain with G-Cter in ubiquitin)). The Fibronectin type-III 1 domain occupies 366–457; it reads PPARVQLVRA…VPQAATAPPS (92 aa). Residues 407-434 are disordered; sequence ATATSPTPNPVPSVPANPPKSPAPAAAA. The residue at position 411 (serine 411) is a Phosphoserine. Pro residues predominate over residues 413–428; that stretch reads TPNPVPSVPANPPKSP. The segment at 500-550 is required for interaction with OGT; sequence LVTMRPASQAGKAPVTVTSLPASVRMVVPTQSAQGTVIGSNPQMSGMAALA. Arginine 504 and arginine 524 each carry omega-N-methylarginine. Phosphoserine is present on residues serine 598, serine 666, and serine 669. The interaction with SIN3A stretch occupies residues 610 to 722; sequence LKTAAAQVGT…KGPLPAGTIL (113 aa). Residues 750–902 are interaction with ZBTB17; sequence ILGISSVSPS…SLAGAGAHST (153 aa). Lysine 813 carries the post-translational modification N6-acetyllysine. The interaction with GABP2 stretch occupies residues 813-912; the sequence is KIITAVPKIA…SASLATPITT (100 aa). 3 HCF repeat repeats span residues 1010 to 1035, 1072 to 1097, and 1101 to 1126; these read TLVCSNPPCETHETGTTNTATTTVVA, VRVCSNPPCETHETGTTNTATTATSN, and QHGCSNPPCETHETGTTSTATTAMSS. One copy of the HCF repeat 4; degenerate repeat lies at 1157 to 1182; the sequence is VQGTVKPQCQTQQTNMTTTTMTVQAT. The residue at position 1204 (serine 1204) is a Phosphoserine. Position 1216 is an asymmetric dimethylarginine (arginine 1216). 4 disordered regions span residues 1219–1242, 1302–1375, 1444–1475, and 1494–1525; these read LSGPSSKDMPTGRQPETYHTYTTN, PCET…TSTG, TVTSNMSSNQDPPPAASDQGEVASTQGDSTNI, and TTVTQSTPVPGPSVPPPEELQVSPGPRQQLPP. The residue at position 1223 (serine 1223) is a Phosphoserine. HCF repeat repeat units follow at residues 1295 to 1320 and 1323 to 1348; these read TQVCSNPPCETHETGTTNTATTSNAG and QRVCSNPPCETHETGTTHTATTATSN. The segment covering 1308–1321 has biased composition (low complexity); that stretch reads TGTTNTATTSNAGS. The stretch at 1358–1383 is one HCF repeat 7; degenerate repeat; it reads QQPASGHPCETHQTTSTGTTMSVSVG. The stretch at 1423–1448 is one HCF repeat 8 repeat; sequence QRVCSNPPCETHETGTTHTATTVTSN. Threonine 1500 is subject to Phosphothreonine. Positions 1502 to 1511 are enriched in pro residues; that stretch reads VPGPSVPPPE. Serine 1506, serine 1516, and serine 1781 each carry phosphoserine. Fibronectin type-III domains follow at residues 1808–1898 and 1900–2016; these read PPPP…TCLP and FPGA…TSKD. Residues lysine 1817 and lysine 1818 each participate in a glycyl lysine isopeptide (Lys-Gly) (interchain with G-Cter in ubiquitin) cross-link. Serine 1848 bears the Phosphoserine mark. Residues 2004-2045 form a disordered region; it reads ATQVRWLQETSKDSSGTKPASKRPMSSPEMKSAPKKSKADGQ. The residue at position 2015 (lysine 2015) is an N6-acetyllysine. A Glycyl lysine isopeptide (Lys-Gly) (interchain with G-Cter in SUMO2) cross-link involves residue lysine 2034.

As to quaternary structure, composed predominantly of six polypeptides ranging from 110 to 150 kDa and a minor 300 kDa polypeptide. The majority of N- and C-terminal cleavage products remain tightly, albeit non-covalently, associated. Interacts with POU2F1, CREB3, ZBTB17, EGR2, E2F4, CREBZF, SP1, GABP2, Sin3 HDAC complex (SIN3A, HDAC1, HDAC2, SUDS3), SAP30, SIN3B and FHL2. Component of a MLL1 complex, composed of at least the core components KMT2A/MLL1, ASH2L, HCFC1, WDR5 and RBBP5, as well as the facultative components BACC1, CHD8, DPY30, E2F6, HCFC2, HSP70, INO80C, KANSL1, LAS1L, MAX, MCRS1, MEN1, MGA, KAT8, PELP1, PHF20, PRP31, RING2, RUVBL1, RUVBL2, SENP3, TAF1, TAF4, TAF6, TAF7, TAF9 and TEX10. Component of a THAP1/THAP3-HCFC1-OGT complex that is required for the regulation of the transcriptional activity of RRM1. Interacts directly with THAP3 (via its HBM). Interacts (via the Kelch-repeat domain) with THAP1 (via the HBM); the interaction recruits HCHC1 to the RRM1. Interacts with THAP7 and THAP11 (via the HMB). Interacts directly with OGT; the interaction, which requires the HCFC1 cleavage site domain, glycosylates and promotes the proteolytic processing of HCFC1 and retains OGT in the nucleus. Component of the SET1 complex, at least composed of the catalytic subunit (SETD1A or SETD1B), WDR5, WDR82, RBBP5, ASH2L, CXXC1, HCFC1 and DPY30. Component of the NSL complex at least composed of MOF/KAT8, KANSL1, KANSL2, KANSL3, MCRS1, PHF20, OGT1/OGT, WDR5 and HCFC1. Component of a complex at least composed of ZNF335, HCFC1, CCAR2, EMSY, MKI67, RBBP5, ASH2L and WDR5; the complex is formed as a result of interactions between components of a nuclear receptor-mediated transcription complex and a histone methylation complex. Within the complex interacts with ZNF335. Interacts with TET2 and TET3. Interacts with HCFC1R1. Interacts with THAP11. Interacts (via Kelch domain) with KMT2E (via HBM motif). Interacts with E2F1. Accessory scaffold component of the polycomb repressive deubiquitinase (PR-DUB) complex, at least composed of BAP1, one of ASXL1, ASXL2 or (probably) ASXL3 and one of MBD5 or MBD6; the PR-DUB core associates with a number of accessory proteins, including FOXK1, FOXK2, KDM1B, HCFC1, YY1 and OGT. Interacts with YY1 (via Gly-rich region); the interaction is direct. Interacts with BAP1 (via HBM-like motif). Proteolytically cleaved at one or several PPCE--THET sites within the HCF repeats. Further cleavage of the primary N- and C-terminal chains results in a 'trimming' and accumulation of the smaller chains. Cleavage is promoted by O-glycosylation. In terms of processing, O-glycosylated. GlcNAcylation by OGT promotes proteolytic processing. Post-translationally, ubiquitinated. Lys-1817 and Lys-1818 are ubiquitinated both via 'Lys-48'- and 'Lys-63'-linked polyubiquitin chains. BAP1 mediated deubiquitination of 'Lys-48'-linked polyubiquitin chains; deubiquitination by BAP1 does not seem to stabilize the protein. In terms of tissue distribution, expressed in liver, pituitary gland, skeletal muscle, kidney, eye and brain (at protein level). Also observed at low level in heart, spleen and lung.

The protein resides in the nucleus. It localises to the cytoplasm. Functionally, transcriptional coregulator. Serves as a scaffold protein, bridging interactions between transcription factors, including THAP11 and ZNF143, and transcriptional coregulators. Involved in control of the cell cycle. Also antagonizes transactivation by ZBTB17 and GABP2; represses ZBTB17 activation of the p15(INK4b) promoter and inhibits its ability to recruit p300. Coactivator for EGR2 and GABP2. Tethers the chromatin modifying Set1/Ash2 histone H3 'Lys-4' methyltransferase (H3K4me) and Sin3 histone deacetylase (HDAC) complexes (involved in the activation and repression of transcription respectively) together. As part of the NSL complex it may be involved in acetylation of nucleosomal histone H4 on several lysine residues. Recruits KMT2E to E2F1 responsive promoters promoting transcriptional activation and thereby facilitates G1 to S phase transition. Modulates expression of homeobox protein PDX1, perhaps acting in concert with transcription factor E2F1, thereby regulating pancreatic beta-cell growth and glucose-stimulated insulin secretion. May negatively modulate transcriptional activity of FOXO3. The polypeptide is Host cell factor 1 (Mus musculus (Mouse)).